A 563-amino-acid chain; its full sequence is Arginine--tRNA ligase (563 aa).

A 'HIGH' region motif is present at residues 121–131; it reads PNIAKPFSIGH.

The protein belongs to the class-I aminoacyl-tRNA synthetase family. As to quaternary structure, monomer.

It localises to the cytoplasm. It carries out the reaction tRNA(Arg) + L-arginine + ATP = L-arginyl-tRNA(Arg) + AMP + diphosphate. The protein is Arginine--tRNA ligase of Streptococcus pneumoniae (strain Hungary19A-6).